A 485-amino-acid polypeptide reads, in one-letter code: Probable cobyric acid synthase (485 aa).

Residues 250–435 (EIEVAVIRLP…LHGLFDNRNI (186 aa)) enclose the GATase cobBQ-type domain. The Nucleophile role is filled by Cys328. Residue His427 is part of the active site.

It belongs to the CobB/CobQ family. CobQ subfamily.

The protein operates within cofactor biosynthesis; adenosylcobalamin biosynthesis. In terms of biological role, catalyzes amidations at positions B, D, E, and G on adenosylcobyrinic A,C-diamide. NH(2) groups are provided by glutamine, and one molecule of ATP is hydrogenolyzed for each amidation. In Methanosarcina mazei (strain ATCC BAA-159 / DSM 3647 / Goe1 / Go1 / JCM 11833 / OCM 88) (Methanosarcina frisia), this protein is Probable cobyric acid synthase.